We begin with the raw amino-acid sequence, 62 residues long: uncharacterized protein (62 aa).

The signal sequence occupies residues 1–22; sequence MVNVALLLDQIIATPLRSMVEA.

This is an uncharacterized protein from Archaeoglobus fulgidus (strain ATCC 49558 / DSM 4304 / JCM 9628 / NBRC 100126 / VC-16).